We begin with the raw amino-acid sequence, 689 residues long: Potassium-transporting ATPase ATP-binding subunit (689 aa).

Transmembrane regions (helical) follow at residues 35 to 55, 62 to 82, 220 to 240, and 260 to 280; these read VMFV…AILA, AAFT…ANFA, ALTI…ATLF, and VLVA…LSAI. The active-site 4-aspartylphosphate intermediate is the Asp-313. ATP contacts are provided by residues Asp-350, Glu-354, 383–390, and Lys-401; that span reads FSAQTRMS. Positions 524 and 528 each coordinate Mg(2+). 3 consecutive transmembrane segments (helical) span residues 594–614, 622–642, and 665–685; these read FAII…LNVM, AIMS…PLAL, and VGGL…LVAL.

This sequence belongs to the cation transport ATPase (P-type) (TC 3.A.3) family. Type IA subfamily. In terms of assembly, the system is composed of three essential subunits: KdpA, KdpB and KdpC.

The protein resides in the cell inner membrane. The enzyme catalyses K(+)(out) + ATP + H2O = K(+)(in) + ADP + phosphate + H(+). Functionally, part of the high-affinity ATP-driven potassium transport (or Kdp) system, which catalyzes the hydrolysis of ATP coupled with the electrogenic transport of potassium into the cytoplasm. This subunit is responsible for energy coupling to the transport system and for the release of the potassium ions to the cytoplasm. This chain is Potassium-transporting ATPase ATP-binding subunit, found in Serratia proteamaculans (strain 568).